The primary structure comprises 60 residues: Large ribosomal subunit protein bL32 (60 aa).

The span at 1–16 (MAVPKRKTSPSKRGMR) shows a compositional bias: basic residues. Residues 1–60 (MAVPKRKTSPSKRGMRRSADALKAPTYVEDKNSGEMRRPHHIDLKTGMYRGRQVLTPKES) form a disordered region. Residues 28 to 44 (VEDKNSGEMRRPHHIDL) show a composition bias toward basic and acidic residues.

The protein belongs to the bacterial ribosomal protein bL32 family.

The sequence is that of Large ribosomal subunit protein bL32 from Mesorhizobium japonicum (strain LMG 29417 / CECT 9101 / MAFF 303099) (Mesorhizobium loti (strain MAFF 303099)).